Reading from the N-terminus, the 81-residue chain is ATP synthase subunit c, chloroplastic (81 aa).

2 helical membrane passes run 3 to 23 and 57 to 77; these read PLISAASVIAAGLSVGLASIG and LAFMEALTIYGLVVALALLFA.

The protein belongs to the ATPase C chain family. In terms of assembly, F-type ATPases have 2 components, F(1) - the catalytic core - and F(0) - the membrane proton channel. F(1) has five subunits: alpha(3), beta(3), gamma(1), delta(1), epsilon(1). F(0) has four main subunits: a(1), b(1), b'(1) and c(10-14). The alpha and beta chains form an alternating ring which encloses part of the gamma chain. F(1) is attached to F(0) by a central stalk formed by the gamma and epsilon chains, while a peripheral stalk is formed by the delta, b and b' chains.

It localises to the plastid. Its subcellular location is the chloroplast thylakoid membrane. Its function is as follows. F(1)F(0) ATP synthase produces ATP from ADP in the presence of a proton or sodium gradient. F-type ATPases consist of two structural domains, F(1) containing the extramembraneous catalytic core and F(0) containing the membrane proton channel, linked together by a central stalk and a peripheral stalk. During catalysis, ATP synthesis in the catalytic domain of F(1) is coupled via a rotary mechanism of the central stalk subunits to proton translocation. In terms of biological role, key component of the F(0) channel; it plays a direct role in translocation across the membrane. A homomeric c-ring of between 10-14 subunits forms the central stalk rotor element with the F(1) delta and epsilon subunits. This chain is ATP synthase subunit c, chloroplastic, found in Pinus koraiensis (Korean pine).